A 441-amino-acid chain; its full sequence is Glutamyl-tRNA reductase (441 aa).

Substrate contacts are provided by residues T49 to R52, S109, E114 to Q116, and Q120. The active-site Nucleophile is the C50. G198 to S203 is a binding site for NADP(+).

It belongs to the glutamyl-tRNA reductase family. In terms of assembly, homodimer.

The enzyme catalyses (S)-4-amino-5-oxopentanoate + tRNA(Glu) + NADP(+) = L-glutamyl-tRNA(Glu) + NADPH + H(+). Its pathway is porphyrin-containing compound metabolism; protoporphyrin-IX biosynthesis; 5-aminolevulinate from L-glutamyl-tRNA(Glu): step 1/2. It participates in porphyrin-containing compound metabolism; chlorophyll biosynthesis. Catalyzes the NADPH-dependent reduction of glutamyl-tRNA(Glu) to glutamate 1-semialdehyde (GSA). In Prochlorococcus marinus (strain NATL1A), this protein is Glutamyl-tRNA reductase.